Here is a 244-residue protein sequence, read N- to C-terminus: WUSCHEL-related homeobox 3 (244 aa).

Residues 4-68 (VASTRWCPTP…NHKARDRQKL (65 aa)) constitute a DNA-binding region (homeobox; WUS-type).

It belongs to the WUS homeobox family. As to expression, expressed in aerial parts of seedlings, inflorescences and flowers at low level. Expressed in a restricted number of L1 cells at the lateral regions of flower primordia.

It localises to the nucleus. In terms of biological role, probable transcription factor required to initiate organ founder cells in a lateral domain of shoot meristems. Involved in the lateral sepal axis-dependent development of flowers, probably by regulating the proliferation of L1 cells at the lateral region of flower primordia. Required for the formation of the margin cells of the first and second whorl organs. The protein is WUSCHEL-related homeobox 3 (WOX3) of Arabidopsis thaliana (Mouse-ear cress).